The chain runs to 35 residues: Cycloamanide F proprotein (35 aa).

Positions M1–P10 are excised as a propeptide. Positions I11 to P18 form a cross-link, cyclopeptide (Ile-Pro). The propeptide occupies C19–C35.

Belongs to the MSDIN fungal toxin family. Post-translationally, processed by the macrocyclase-peptidase enzyme POPB to yield a cyclic decapeptide. POPB first removes 10 residues from the N-terminus. Conformational trapping of the remaining peptide forces the enzyme to release this intermediate rather than proceed to macrocyclization. The enzyme rebinds the remaining peptide in a different conformation and catalyzes macrocyclization of the N-terminal 8 residues.

Its function is as follows. Cyclic octapeptide that belongs to the MSDIN-like toxin family responsible for a large number of food poisoning cases and deaths. Cycloaminide E is structurally related to other cycloamanides that are non-toxic to mammals but show immunosuppressive activity. This is Cycloamanide F proprotein from Amanita phalloides (Death cap).